Reading from the N-terminus, the 490-residue chain is GTPase Der (490 aa).

2 EngA-type G domains span residues 3 to 166 (PVVA…MEDL) and 203 to 376 (IKLA…DSST). Residues 9 to 16 (GRPNVGKS), 56 to 60 (DTGGI), 118 to 121 (NKTD), 209 to 216 (GRPNVGKS), 256 to 260 (DTAGV), and 321 to 324 (NKWD) each bind GTP. In terms of domain architecture, KH-like spans 377–461 (RRVGTSMLTR…PIRIQFKEGE (85 aa)).

The protein belongs to the TRAFAC class TrmE-Era-EngA-EngB-Septin-like GTPase superfamily. EngA (Der) GTPase family. Associates with the 50S ribosomal subunit.

GTPase that plays an essential role in the late steps of ribosome biogenesis. This Escherichia coli O81 (strain ED1a) protein is GTPase Der.